The primary structure comprises 525 residues: Mitochondrial-processing peptidase subunit alpha (525 aa).

Residues 1–33 constitute a mitochondrion transit peptide; sequence MAAVVLAATRLLRGSGSWGCSRLRFGPPAYRRF. At Lys-64 the chain carries N6-succinyllysine. The residue at position 299 (Lys-299) is an N6-acetyllysine.

It belongs to the peptidase M16 family. In terms of assembly, heterodimer of PMPCA (alpha) and PMPCB (beta) subunits, forming the mitochondrial processing protease (MPP) in which PMPCA is involved in substrate recognition and binding and PMPCB is the catalytic subunit.

The protein localises to the mitochondrion matrix. The protein resides in the mitochondrion inner membrane. Substrate recognition and binding subunit of the essential mitochondrial processing protease (MPP), which cleaves the mitochondrial sequence off newly imported precursors proteins. This Pongo abelii (Sumatran orangutan) protein is Mitochondrial-processing peptidase subunit alpha (PMPCA).